A 159-amino-acid chain; its full sequence is MIDSDGFRPNVGIILTNDVGQVLWARRINQDAWQFPQGGINARETPEEALFRELNEEVGLEEQDVKILACTRGWLRYRLPQRLVRTHSQPLCIGQKQKWFLLRLTGAEDRVRMDLTGKPEFDGWRWVSYWYPLGQVVTFKREVYRRALKELAPRLPVRD.

The region spanning 6–149 (GFRPNVGIIL…KREVYRRALK (144 aa)) is the Nudix hydrolase domain. Residues 38 to 59 (GGINARETPEEALFRELNEEVG) carry the Nudix box motif.

This sequence belongs to the Nudix hydrolase family. RppH subfamily. It depends on a divalent metal cation as a cofactor.

Functionally, accelerates the degradation of transcripts by removing pyrophosphate from the 5'-end of triphosphorylated RNA, leading to a more labile monophosphorylated state that can stimulate subsequent ribonuclease cleavage. This Stutzerimonas stutzeri (strain A1501) (Pseudomonas stutzeri) protein is RNA pyrophosphohydrolase.